Here is a 102-residue protein sequence, read N- to C-terminus: A-type ATP synthase subunit F (102 aa).

The protein belongs to the V-ATPase F subunit family. Has multiple subunits with at least A(3), B(3), C, D, E, F, H, I and proteolipid K(x).

It localises to the cell membrane. Functionally, component of the A-type ATP synthase that produces ATP from ADP in the presence of a proton gradient across the membrane. The polypeptide is A-type ATP synthase subunit F (Thermococcus gammatolerans (strain DSM 15229 / JCM 11827 / EJ3)).